A 1284-amino-acid polypeptide reads, in one-letter code: Zinc finger protein 423 (1284 aa).

Disordered regions lie at residues 1–64 (MHKK…MEDE) and 87–117 (AHRC…SPTQ). A compositionally biased stretch (basic and acidic residues) spans 34-46 (CDQKTSRALEDRN). Ser47 and Ser50 each carry phosphoserine. Over residues 54–64 (RNEDDEDMEDE) the composition is skewed to acidic residues. Residues 67-93 (YTCDHCQQDFESLADLTDHRAHRCPGD) form a C2H2-type 1; degenerate zinc finger. Polar residues predominate over residues 102–117 (WVASSPSSKDVASPTQ). 7 C2H2-type zinc fingers span residues 138-160 (YPCQ…EQIH), 166-188 (FKCT…IKLH), 194-216 (YHCH…LKTH), 222-244 (FKCT…MQAH), 263-286 (FMCD…LTRH), 295-318 (LQCI…HQAH), and 323-345 (HKCP…LDSH). The disordered stretch occupies residues 346–398 (RQPDSSNHSVSPDPVLGSVASMSSATPDSSASVERGSTPDSTLKPLRGQKKMR). A compositionally biased stretch (low complexity) spans 363 to 377 (SVASMSSATPDSSAS). The segment at 409 to 433 (YSCPYCSKRDFNSLAVLEIHLKTIH) adopts a C2H2-type 9; degenerate zinc-finger fold. 3 C2H2-type zinc fingers span residues 441 to 464 (HTCQ…RKLH), 480 to 503 (FHCN…RVSH), and 517 to 540 (FFCN…QQAH). The segment at 563 to 588 (YSCPYCTNSPIFGSILKLTKHIKENH) adopts a C2H2-type 13; atypical zinc-finger fold. The disordered stretch occupies residues 590–624 (NIPLAHSKKSKAEQSPVSSDVEVSSPKRQRLSASA). The residue at position 604 (Ser604) is a Phosphoserine. The span at 604–615 (SPVSSDVEVSSP) shows a compositional bias: low complexity. C2H2-type zinc fingers lie at residues 632–654 (YPCN…LKLH), 662–684 (QACP…LTVH), 692–715 (YVCE…LDMH), 720–743 (YHCT…AVKH), 750–773 (YRCT…KHSH), 781–803 (HKCI…ITTH), and 807–830 (YNCK…REKH). The C2H2-type 21; degenerate zinc-finger motif lies at 886-908 (YGCDICGAAYTMEVLLQNHRLRD). C2H2-type zinc fingers lie at residues 930–952 (HKCN…LQTH), 959–981 (YMCP…KVTH), and 1020–1042 (FRCV…GTFH). Residue Ser1054 is modified to Phosphoserine. The segment at 1064–1082 (YKCALCLKEFRSKQDLVKL) adopts a C2H2-type 25; degenerate zinc-finger fold. 5 consecutive C2H2-type zinc fingers follow at residues 1120 to 1143 (LRCP…QVDH), 1168 to 1190 (YQCI…VANH), 1198 to 1220 (HECK…LIEH), 1229 to 1252 (FKCP…FAVH), and 1259 to 1282 (YDCS…MSQH). Residues 1136-1147 (ESHMQVDHRDLT) show a composition bias toward basic and acidic residues. The interval 1136–1163 (ESHMQVDHRDLTPETSGPRKGTQTSPVP) is disordered.

This sequence belongs to the krueppel C2H2-type zinc-finger protein family. As to quaternary structure, homodimer. Interacts with EBF1. Interacts with SMAD1 and SMAD4. Interacts with PARP1. Interacts with CEP290. Expressed in brain, lung, skeletal muscle, heart, pancreas and kidney but not liver or placenta. Also expressed in aorta, ovary, pituitary, small intestine, fetal brain, fetal kidney and, within the adult brain, in the substantia nigra, medulla, amygdala, thalamus and cerebellum.

It localises to the nucleus. Transcription factor that can both act as an activator or a repressor depending on the context. Plays a central role in BMP signaling and olfactory neurogenesis. Associates with SMADs in response to BMP2 leading to activate transcription of BMP target genes. Acts as a transcriptional repressor via its interaction with EBF1, a transcription factor involved in terminal olfactory receptor neurons differentiation; this interaction preventing EBF1 to bind DNA and activate olfactory-specific genes. Involved in olfactory neurogenesis by participating in a developmental switch that regulates the transition from differentiation to maturation in olfactory receptor neurons. Controls proliferation and differentiation of neural precursors in cerebellar vermis formation. The protein is Zinc finger protein 423 (ZNF423) of Homo sapiens (Human).